Here is a 128-residue protein sequence, read N- to C-terminus: Claw keratin (128 aa).

2 consecutive repeat copies span residues 83–91 and 92–100. The tract at residues 83–104 is 3 X 9 AA tandem repeats, Gly-rich; the sequence is GGYGGLGGYGGYGGLGGYGGYG. The stretch at 101–109 is one 3; approximate repeat; that stretch reads GGYGGFGSC.

Belongs to the avian keratin family. In terms of tissue distribution, abundantly expressed in the claw and at a low level in feather tissue.

In Gallus gallus (Chicken), this protein is Claw keratin (CKER1).